Here is a 945-residue protein sequence, read N- to C-terminus: Isoleucine--tRNA ligase (945 aa).

Positions 66–76 match the 'HIGH' region motif; it reads PYANGDIHLGH. Residue Glu581 participates in L-isoleucyl-5'-AMP binding. The short motif at 622–626 is the 'KMSKS' region element; it reads KMSKS. Residue Lys625 participates in ATP binding. Zn(2+) contacts are provided by Cys908, Cys911, Cys928, and Cys931.

It belongs to the class-I aminoacyl-tRNA synthetase family. IleS type 1 subfamily. As to quaternary structure, monomer. Requires Zn(2+) as cofactor.

It is found in the cytoplasm. It catalyses the reaction tRNA(Ile) + L-isoleucine + ATP = L-isoleucyl-tRNA(Ile) + AMP + diphosphate. In terms of biological role, catalyzes the attachment of isoleucine to tRNA(Ile). As IleRS can inadvertently accommodate and process structurally similar amino acids such as valine, to avoid such errors it has two additional distinct tRNA(Ile)-dependent editing activities. One activity is designated as 'pretransfer' editing and involves the hydrolysis of activated Val-AMP. The other activity is designated 'posttransfer' editing and involves deacylation of mischarged Val-tRNA(Ile). This chain is Isoleucine--tRNA ligase, found in Burkholderia lata (strain ATCC 17760 / DSM 23089 / LMG 22485 / NCIMB 9086 / R18194 / 383).